The chain runs to 321 residues: XylDLEGF operon transcriptional activator 1 (321 aa).

Positions Glu-214–Gln-315 constitute an HTH araC/xylS-type domain. DNA-binding regions (H-T-H motif) lie at residues Glu-231–Ala-252 and Ile-282–Phe-305.

Its subcellular location is the cytoplasm. Regulatory protein of the TOL plasmid xyl operons. XylS activates the xylXYZLTEGFJQKIH operon required for the degradation of toluene, m-xylene and p-xylene. The sequence is that of XylDLEGF operon transcriptional activator 1 (xylS1) from Pseudomonas putida (Arthrobacter siderocapsulatus).